The following is a 78-amino-acid chain: NAD(P)H-quinone oxidoreductase subunit O (78 aa).

Belongs to the complex I NdhO subunit family. In terms of assembly, NDH-1 can be composed of about 15 different subunits; different subcomplexes with different compositions have been identified which probably have different functions.

Its subcellular location is the cellular thylakoid membrane. The catalysed reaction is a plastoquinone + NADH + (n+1) H(+)(in) = a plastoquinol + NAD(+) + n H(+)(out). It carries out the reaction a plastoquinone + NADPH + (n+1) H(+)(in) = a plastoquinol + NADP(+) + n H(+)(out). In terms of biological role, NDH-1 shuttles electrons from an unknown electron donor, via FMN and iron-sulfur (Fe-S) centers, to quinones in the respiratory and/or the photosynthetic chain. The immediate electron acceptor for the enzyme in this species is believed to be plastoquinone. Couples the redox reaction to proton translocation, and thus conserves the redox energy in a proton gradient. Cyanobacterial NDH-1 also plays a role in inorganic carbon-concentration. This chain is NAD(P)H-quinone oxidoreductase subunit O, found in Prochlorococcus marinus (strain AS9601).